Here is a 597-residue protein sequence, read N- to C-terminus: Adenine deaminase 2 (597 aa).

It belongs to the metallo-dependent hydrolases superfamily. Adenine deaminase family. Mn(2+) serves as cofactor.

It carries out the reaction adenine + H2O + H(+) = hypoxanthine + NH4(+). The protein is Adenine deaminase 2 of Agrobacterium fabrum (strain C58 / ATCC 33970) (Agrobacterium tumefaciens (strain C58)).